The following is a 1054-amino-acid chain: Desmoglein-1 (1054 aa).

An N-terminal signal peptide occupies residues 1–23; it reads MNWHFLRTATVLLIFLVVVEINS. A propeptide spanning residues 24–49 is cleaved from the precursor; that stretch reads EFRIQVRDYNTKNGTIKWHSIRRQKR. 3 N-linked (GlcNAc...) asparagine glycosylation sites follow: N36, N110, and N180. Cadherin domains follow at residues 50–157, 158–269, 270–389, and 386–493; these read EWIK…PPVF, SMST…IPYM, EPSS…RPGS, and RPGS…KDSE. Topologically, residues 50–566 are extracellular; that stretch reads EWIKFAAACR…NLSDNVHFGP (517 aa). The disordered stretch occupies residues 487 to 554; sequence GWEKDSEKVT…QSNNNHQELG (68 aa). Residues 496–507 show a composition bias toward low complexity; that stretch reads TSSQNSGSSTGD. Positions 508 to 517 are enriched in gly residues; sequence SSGGTGGGGR. Low complexity predominate over residues 523–534; the sequence is GDTTTNTGGKTS. A compositionally biased stretch (polar residues) spans 542-554; sequence TQTQSNNNHQELG. A glycan (N-linked (GlcNAc...) asparagine) is linked at N557. A helical transmembrane segment spans residues 567-587; the sequence is AGIGLLIMGFLVLGLVPFLLM. Residues 588–1054 lie on the Cytoplasmic side of the membrane; that stretch reads CCDCGGAPGA…TKYSTVQYTK (467 aa). Desmoglein repeat repeat units follow at residues 830 to 856, 857 to 886, 887 to 916, 917 to 944, and 945 to 973; these read TYPSGPGVQHPMPIPDPLGYGNVTVTE, SYTTSGTLKPTVHVHDNRHASNVVVTERVV, GPISGTDLHGMLEMPDLRDGSNVIVTERVI, APSSSLPTSLTMPDPRESSNVVVTERVI, and RPASGMMGNLSIHPELSNAQNVIVTERVV. The interval 1018–1040 is disordered; that stretch reads GHVRSSSDHHFSQTLGSASPSTA. Residues 1029–1040 show a composition bias toward polar residues; the sequence is SQTLGSASPSTA.

Binds to JUP/plakoglobin. Interacts with PKP2. Interacts with DSC3; there is evidence to suggest that the interaction promotes cell-cell adhesion of keratinocytes.

The protein resides in the cell membrane. It localises to the cell junction. Its subcellular location is the desmosome. It is found in the cytoplasm. The protein localises to the nucleus. Its function is as follows. Component of intercellular desmosome junctions. Involved in the interaction of plaque proteins and intermediate filaments mediating cell-cell adhesion. This is Desmoglein-1 (DSG1) from Canis lupus familiaris (Dog).